The primary structure comprises 261 residues: Ribonuclease 3 (261 aa).

The region spanning 20 to 144 is the RNase III domain; the sequence is YFALYRMLGF…FIGAIYLDKG (125 aa). Residue Glu62 coordinates Mg(2+). Asp66 is a catalytic residue. Mg(2+) contacts are provided by Asn130 and Glu133. Glu133 is an active-site residue. Residues 172 to 241 form the DRBM domain; sequence NFKSKLFEWC…SQMTWRKIRT (70 aa).

It belongs to the ribonuclease III family. Homodimer. Mg(2+) serves as cofactor.

It localises to the cytoplasm. The enzyme catalyses Endonucleolytic cleavage to 5'-phosphomonoester.. Its function is as follows. Digests double-stranded RNA. Involved in the processing of primary rRNA transcript to yield the immediate precursors to the large and small rRNAs (23S and 16S). Processes some mRNAs, and tRNAs when they are encoded in the rRNA operon. Processes pre-crRNA and tracrRNA of type II CRISPR loci if present in the organism. This is Ribonuclease 3 from Azobacteroides pseudotrichonymphae genomovar. CFP2.